The primary structure comprises 269 residues: Tryptophan synthase alpha chain (269 aa).

Active-site proton acceptor residues include Glu-49 and Asp-60.

The protein belongs to the TrpA family. Tetramer of two alpha and two beta chains.

It catalyses the reaction (1S,2R)-1-C-(indol-3-yl)glycerol 3-phosphate + L-serine = D-glyceraldehyde 3-phosphate + L-tryptophan + H2O. Its pathway is amino-acid biosynthesis; L-tryptophan biosynthesis; L-tryptophan from chorismate: step 5/5. Its function is as follows. The alpha subunit is responsible for the aldol cleavage of indoleglycerol phosphate to indole and glyceraldehyde 3-phosphate. The polypeptide is Tryptophan synthase alpha chain (Actinobacillus pleuropneumoniae serotype 3 (strain JL03)).